A 343-amino-acid polypeptide reads, in one-letter code: Protein RecA (343 aa).

Residue 66–73 (GPESSGKT) coordinates ATP.

Belongs to the RecA family.

It is found in the cytoplasm. Can catalyze the hydrolysis of ATP in the presence of single-stranded DNA, the ATP-dependent uptake of single-stranded DNA by duplex DNA, and the ATP-dependent hybridization of homologous single-stranded DNAs. It interacts with LexA causing its activation and leading to its autocatalytic cleavage. This chain is Protein RecA, found in Nitrosomonas europaea (strain ATCC 19718 / CIP 103999 / KCTC 2705 / NBRC 14298).